A 231-amino-acid chain; its full sequence is uncharacterized protein (231 aa).

Position 10–34 (10–34) interacts with NADP(+); sequence IITGASSGIGAATAKALEKQGVKVV. Serine 140 is a substrate binding site. Residue tyrosine 153 is the Proton acceptor of the active site.

Belongs to the short-chain dehydrogenases/reductases (SDR) family.

This is an uncharacterized protein from Staphylococcus haemolyticus (strain JCSC1435).